Here is a 278-residue protein sequence, read N- to C-terminus: HTH-type transcriptional activator RhaS (278 aa).

One can recognise an HTH araC/xylS-type domain in the interval 174 to 272 (NQLMAWLEDH…SWSPREIRQG (99 aa)). 2 consecutive DNA-binding regions (H-T-H motif) follow at residues 191-212 (ETVA…KQHT) and 239-262 (VTDI…RREF).

Binds DNA as a dimer.

The protein localises to the cytoplasm. Activates expression of the rhaBAD and rhaT operons. The sequence is that of HTH-type transcriptional activator RhaS from Enterobacter sp. (strain 638).